The following is a 475-amino-acid chain: ATP synthase subunit beta, chloroplastic (475 aa).

156–163 is a binding site for ATP; that stretch reads GGAGVGKT.

The protein belongs to the ATPase alpha/beta chains family. In terms of assembly, F-type ATPases have 2 components, CF(1) - the catalytic core - and CF(0) - the membrane proton channel. CF(1) has five subunits: alpha(3), beta(3), gamma(1), delta(1), epsilon(1). CF(0) has four main subunits: a(1), b(1), b'(1) and c(9-12).

Its subcellular location is the plastid. It localises to the chloroplast thylakoid membrane. It catalyses the reaction ATP + H2O + 4 H(+)(in) = ADP + phosphate + 5 H(+)(out). Its function is as follows. Produces ATP from ADP in the presence of a proton gradient across the membrane. The catalytic sites are hosted primarily by the beta subunits. The polypeptide is ATP synthase subunit beta, chloroplastic (Trieres chinensis (Marine centric diatom)).